A 626-amino-acid polypeptide reads, in one-letter code: Trehalase (626 aa).

The first 35 residues, 1 to 35, serve as a signal peptide directing secretion; sequence MASSCSIRCGSRNILVNAAATFLALLVVLRCFANA. Residues 36–595 are Extracellular-facing; sequence EKPSPCQSDV…STPQPVVVST (560 aa). The N-linked (GlcNAc...) asparagine glycan is linked to Asn-104. Residues Arg-181, 188-189, Asn-225, and 234-236 contribute to the substrate site; these read WD and RSQ. N-linked (GlcNAc...) asparagine glycosylation occurs at Asn-274. Substrate-binding positions include 299-301 and Gly-333; that span reads RPE. The Proton donor/acceptor role is filled by Asp-335. Residues Asn-350, Asn-384, Asn-498, and Asn-525 are each glycosylated (N-linked (GlcNAc...) asparagine). Glu-532 (proton donor/acceptor) is an active-site residue. Glu-547 is a substrate binding site. Residues 596-616 form a helical membrane-spanning segment; it reads AGQVMTGILALVISLAAGFIG. The Cytoplasmic portion of the chain corresponds to 617 to 626; it reads KMRCANNAAQ.

The protein belongs to the glycosyl hydrolase 37 family. In terms of assembly, monomer. Post-translationally, glycosylated; contains 3.1% carbohydrates.

The protein resides in the membrane. It carries out the reaction alpha,alpha-trehalose + H2O = alpha-D-glucose + beta-D-glucose. Its activity is regulated as follows. Inhibited by sodium, potassium and ammonium ions, and by TEMED. In Apis mellifera (Honeybee), this protein is Trehalase.